We begin with the raw amino-acid sequence, 121 residues long: Small ribosomal subunit protein uS13 (121 aa).

A disordered region spans residues histidine 91–lysine 121. Over residues alanine 106–lysine 121 the composition is skewed to basic residues.

Belongs to the universal ribosomal protein uS13 family. Part of the 30S ribosomal subunit. Forms a loose heterodimer with protein S19. Forms two bridges to the 50S subunit in the 70S ribosome.

Functionally, located at the top of the head of the 30S subunit, it contacts several helices of the 16S rRNA. In the 70S ribosome it contacts the 23S rRNA (bridge B1a) and protein L5 of the 50S subunit (bridge B1b), connecting the 2 subunits; these bridges are implicated in subunit movement. Contacts the tRNAs in the A and P-sites. This is Small ribosomal subunit protein uS13 from Lacticaseibacillus paracasei (strain ATCC 334 / BCRC 17002 / CCUG 31169 / CIP 107868 / KCTC 3260 / NRRL B-441) (Lactobacillus paracasei).